Consider the following 481-residue polypeptide: Zinc finger CCCH domain-containing protein 4 (481 aa).

The C3H1-type zinc finger occupies 157 to 184 (RNRAHVCSFFIRGECTRGAECPYRHEMP). An RRM domain is found at 228–301 (KTLYVGGLNS…QRLKLTWGRP (74 aa)). Residues 329–481 (HNQPPPMQQY…DVSTATGSSQ (153 aa)) are disordered. The span at 331 to 345 (QPPPMQQYYMHPPPA) shows a compositional bias: pro residues. 2 stretches are compositionally biased toward low complexity: residues 369 to 389 (AGGSSTENNGASSSSYMMPPH) and 399 to 410 (YMPSPYQQQYPP). Over residues 423–444 (APPPAAYPYPQQPGPGSRPAPS) the composition is skewed to pro residues. The span at 449–471 (SAISPDSAPAGSGAPSGSSQQAP) shows a compositional bias: low complexity. Residues 472–481 (DVSTATGSSQ) show a composition bias toward polar residues.

This Arabidopsis thaliana (Mouse-ear cress) protein is Zinc finger CCCH domain-containing protein 4.